Here is a 1818-residue protein sequence, read N- to C-terminus: U3 small nucleolar RNA-associated protein 10 (1818 aa).

The helical transmembrane segment at 568–588 (TDFYLLIPLILLALFDNSKLI) threads the bilayer. An HEAT repeat occupies 1778–1816 (LVPYIAELLEDDDEEVEMEVRRGLVRVIENVLGEPLDRY).

Belongs to the HEATR1/UTP10 family. In terms of assembly, component of the ribosomal small subunit (SSU) processome.

Its subcellular location is the nucleus. It is found in the nucleolus. The protein resides in the membrane. Functionally, involved in nucleolar processing of pre-18S ribosomal RNA. Involved in ribosome biosynthesis. The chain is U3 small nucleolar RNA-associated protein 10 from Candida albicans (strain SC5314 / ATCC MYA-2876) (Yeast).